Reading from the N-terminus, the 294-residue chain is Elongation factor Ts (294 aa).

The interval 79–82 (TDFV) is involved in Mg(2+) ion dislocation from EF-Tu.

The protein belongs to the EF-Ts family.

Its subcellular location is the cytoplasm. In terms of biological role, associates with the EF-Tu.GDP complex and induces the exchange of GDP to GTP. It remains bound to the aminoacyl-tRNA.EF-Tu.GTP complex up to the GTP hydrolysis stage on the ribosome. The sequence is that of Elongation factor Ts from Oceanobacillus iheyensis (strain DSM 14371 / CIP 107618 / JCM 11309 / KCTC 3954 / HTE831).